The following is a 436-amino-acid chain: GTPase Der (436 aa).

EngA-type G domains follow at residues 4–167 (PTVA…PVEE) and 175–351 (IRFS…ESQN). GTP is bound by residues 10–17 (GRPNVGKS), 57–61 (DTGGI), 119–122 (NKVD), 181–188 (GRPNVGKS), 229–233 (DTAGM), and 294–297 (NKWD). Residues 352–436 (KRIPSAVLND…PIHLIARKRK (85 aa)) enclose the KH-like domain.

This sequence belongs to the TRAFAC class TrmE-Era-EngA-EngB-Septin-like GTPase superfamily. EngA (Der) GTPase family. As to quaternary structure, associates with the 50S ribosomal subunit.

GTPase that plays an essential role in the late steps of ribosome biogenesis. The chain is GTPase Der from Streptococcus pyogenes serotype M28 (strain MGAS6180).